The sequence spans 925 residues: Bifunctional imidazolonepropionase/histidine ammonia-lyase (925 aa).

The segment at 1 to 414 (MTKNSSTVFT…IKPHVRMEPF (414 aa)) is imidazolonepropionase. The Fe(3+) site is built by His-73 and His-75. Residues His-73 and His-75 each coordinate Zn(2+). The 4-imidazolone-5-propanoate site is built by Arg-82, Tyr-145, and His-178. Tyr-145 contacts N-formimidoyl-L-glutamate. His-243 contacts Fe(3+). His-243 is a Zn(2+) binding site. Gln-246 contacts 4-imidazolone-5-propanoate. Asp-318 is a Fe(3+) binding site. Asp-318 contributes to the Zn(2+) binding site. The N-formimidoyl-L-glutamate site is built by Asn-320 and Gly-322. Position 323 (Thr-323) interacts with 4-imidazolone-5-propanoate. The histidine ammonia-lyase stretch occupies residues 415–925 (MTIILKPGSV…SAGILPDLEA (511 aa)). The 5-imidazolinone (Ala-Gly) cross-link spans 556–558 (ASG). 2,3-didehydroalanine (Ser) is present on Ser-557.

This sequence in the N-terminal section; belongs to the metallo-dependent hydrolases superfamily. HutI family. It in the C-terminal section; belongs to the PAL/histidase family. It depends on Zn(2+) as a cofactor. Fe(3+) is required as a cofactor. Post-translationally, contains an active site 4-methylidene-imidazol-5-one (MIO), which is formed autocatalytically by cyclization and dehydration of residues Ala-Ser-Gly.

The protein resides in the cytoplasm. It catalyses the reaction 4-imidazolone-5-propanoate + H2O = N-formimidoyl-L-glutamate. The enzyme catalyses L-histidine = trans-urocanate + NH4(+). The protein operates within amino-acid degradation; L-histidine degradation into L-glutamate; N-formimidoyl-L-glutamate from L-histidine: step 1/3. It participates in amino-acid degradation; L-histidine degradation into L-glutamate; N-formimidoyl-L-glutamate from L-histidine: step 3/3. Functionally, catalyzes the hydrolytic cleavage of the carbon-nitrogen bond in imidazolone-5-propanoate to yield N-formimidoyl-L-glutamate. It is the third step in the universal histidine degradation pathway. This chain is Bifunctional imidazolonepropionase/histidine ammonia-lyase (hutIH), found in Brucella melitensis biotype 1 (strain ATCC 23456 / CCUG 17765 / NCTC 10094 / 16M).